Consider the following 228-residue polypeptide: Carboxy-S-adenosyl-L-methionine synthase (228 aa).

Residues Tyr30, 55–57, 79–80, and 103–104 each bind S-adenosyl-L-methionine; these read GSS, DN, and DV.

The protein belongs to the class I-like SAM-binding methyltransferase superfamily. Cx-SAM synthase family.

The enzyme catalyses prephenate + S-adenosyl-L-methionine = carboxy-S-adenosyl-L-methionine + 3-phenylpyruvate + H2O. In terms of biological role, catalyzes the conversion of S-adenosyl-L-methionine (SAM) to carboxy-S-adenosyl-L-methionine (Cx-SAM). This is Carboxy-S-adenosyl-L-methionine synthase from Staphylococcus epidermidis (strain ATCC 35984 / DSM 28319 / BCRC 17069 / CCUG 31568 / BM 3577 / RP62A).